Reading from the N-terminus, the 1075-residue chain is DNA-directed RNA polymerase subunit beta (1075 aa).

It belongs to the RNA polymerase beta chain family. In plastids the minimal PEP RNA polymerase catalytic core is composed of four subunits: alpha, beta, beta', and beta''. When a (nuclear-encoded) sigma factor is associated with the core the holoenzyme is formed, which can initiate transcription.

The protein resides in the plastid. It is found in the chloroplast. The enzyme catalyses RNA(n) + a ribonucleoside 5'-triphosphate = RNA(n+1) + diphosphate. Its function is as follows. DNA-dependent RNA polymerase catalyzes the transcription of DNA into RNA using the four ribonucleoside triphosphates as substrates. The protein is DNA-directed RNA polymerase subunit beta of Oryza sativa (Rice).